Here is a 271-residue protein sequence, read N- to C-terminus: Putative phosphoenolpyruvate synthase regulatory protein (271 aa).

152 to 159 (GVSRCGKT) serves as a coordination point for ADP.

The protein belongs to the pyruvate, phosphate/water dikinase regulatory protein family. PSRP subfamily.

The enzyme catalyses [pyruvate, water dikinase] + ADP = [pyruvate, water dikinase]-phosphate + AMP + H(+). It carries out the reaction [pyruvate, water dikinase]-phosphate + phosphate + H(+) = [pyruvate, water dikinase] + diphosphate. Its function is as follows. Bifunctional serine/threonine kinase and phosphorylase involved in the regulation of the phosphoenolpyruvate synthase (PEPS) by catalyzing its phosphorylation/dephosphorylation. This is Putative phosphoenolpyruvate synthase regulatory protein from Legionella pneumophila (strain Lens).